A 63-amino-acid chain; its full sequence is Large ribosomal subunit protein uL30 (63 aa).

It belongs to the universal ribosomal protein uL30 family. As to quaternary structure, part of the 50S ribosomal subunit.

The polypeptide is Large ribosomal subunit protein uL30 (Xylella fastidiosa (strain 9a5c)).